A 352-amino-acid polypeptide reads, in one-letter code: Mitochondrial ubiquitin ligase activator of NFKB 1 (352 aa).

The Cytoplasmic segment spans residues 1-8; it reads MENGGRPS. The helical transmembrane segment at 9 to 29 threads the bilayer; that stretch reads LCQFILLGTTSVVTAALYSVY. Topologically, residues 30-238 are mitochondrial intermembrane; that stretch reads RQKAWVSQEL…LLQRQESSVR (209 aa). A Glycyl lysine isopeptide (Lys-Gly) (interchain with G-Cter in ubiquitin) cross-link involves residue lysine 52. Residues 239-259 traverse the membrane as a helical segment; the sequence is LWKVLALVFGFATCATLFFIL. Residues 260–352 are Cytoplasmic-facing; that stretch reads RKQYLQRQER…ITRVIPLYNS (93 aa). Glycyl lysine isopeptide (Lys-Gly) (interchain with G-Cter in ubiquitin) cross-links involve residues lysine 273 and lysine 299. The segment at 302 to 340 adopts an RING-type zinc-finger fold; it reads CVVCLSSFKSCVFLECGHVCSCTECYRALPEPKKCPICR.

Homooligomer. Interacts with MAP3K7/TAK1. Interacts with UBC9. Interacts with and sumoylates DNM1L. Interacts with MAVS. Interacts with TP53 (via N-terminus); the interaction leads to ubiquitination and proteasomal degradation of TP53. In terms of processing, ubiquitinated by PRKN during mitophagy, leading to its degradation and enhancement of mitophagy. Deubiquitinated by USP30.

The protein resides in the mitochondrion outer membrane. It localises to the peroxisome. The enzyme catalyses S-ubiquitinyl-[E2 ubiquitin-conjugating enzyme]-L-cysteine + [acceptor protein]-L-lysine = [E2 ubiquitin-conjugating enzyme]-L-cysteine + N(6)-ubiquitinyl-[acceptor protein]-L-lysine.. It functions in the pathway protein modification; protein ubiquitination. It participates in protein modification; protein sumoylation. Functionally, exhibits weak E3 ubiquitin-protein ligase activity. E3 ubiquitin ligases accept ubiquitin from an E2 ubiquitin-conjugating enzyme in the form of a thioester and then directly transfer the ubiquitin to targeted substrates. Can ubiquitinate AKT1 preferentially at 'Lys-284' involving 'Lys-48'-linked polyubiquitination and seems to be involved in regulation of Akt signaling by targeting phosphorylated Akt to proteasomal degradation. Mediates polyubiquitination of cytoplasmic TP53 at 'Lys-24' which targets TP53 for proteasomal degradation, thus reducing TP53 levels in the cytoplasm and mitochondrion. Proposed to preferentially act as a SUMO E3 ligase at physiological concentrations. Plays a role in the control of mitochondrial morphology by promoting mitochondrial fragmentation, and influences mitochondrial localization. Likely to promote mitochondrial fission through negatively regulating the mitochondrial fusion proteins MFN1 and MFN2, acting in a pathway that is parallel to the PRKN/PINK1 regulatory pathway. May also be involved in the sumoylation of the membrane fission protein DNM1L. Inhibits cell growth. When overexpressed, activates JNK through MAP3K7/TAK1 and induces caspase-dependent apoptosis. Involved in the modulation of innate immune defense against viruses by inhibiting RIGI-dependent antiviral response. Can mediate RIGI sumoylation and disrupt its polyubiquitination. The sequence is that of Mitochondrial ubiquitin ligase activator of NFKB 1 (MUL1) from Macaca fascicularis (Crab-eating macaque).